The primary structure comprises 373 residues: MKLLSVLALSATATSVLGASIPVDTRAEKFLIELAPGETRWVTEEEKWELKRKGQDFFDITDEEVGFTAAVTQPAIAYPTSIRHADAVNAMIATLSKENMQRDLTKLSSFHNRYYKADFGKQSATWLQEQVQAAINTAGASRYGAKVVSFRHNWAQHSIVATIPGRSPEIVVVGAHQDSINQRSPMTGRAPGADDNGSGSVTILEALRGVLQDQTIVQGKAANTIEFHWYAGEEAGLLGSQAIFANYKQTGKKVKGMLNQDMTGYIKGMVDKGLKVSFGIITDNVNANLTKFVRMIISKYCSIPTIDTRCGYACSDHASANRNGYPSAMVAESPIDLLDPHLHTDSDTIDYLDFDHMIEHAKLIVGFVTELAK.

The first 18 residues, Met-1 to Gly-18, serve as a signal peptide directing secretion. Zn(2+) contacts are provided by His-176 and Asp-195. N-linked (GlcNAc...) asparagine glycosylation occurs at Asn-196. Residues Glu-234 and Asp-261 each coordinate Zn(2+). A glycan (N-linked (GlcNAc...) asparagine) is linked at Asn-288. A disulfide bridge links Cys-310 with Cys-314. His-343 serves as a coordination point for Zn(2+).

Belongs to the peptidase M28 family. M28E subfamily. In terms of assembly, monomer. Zn(2+) is required as a cofactor.

It localises to the secreted. In terms of biological role, extracellular aminopeptidase which contributes to pathogenicity. The chain is Probable leucine aminopeptidase 1 (LAP1) from Trichophyton verrucosum (strain HKI 0517).